Here is a 336-residue protein sequence, read N- to C-terminus: MSQAVQTNGTQPLSKTWELSLYELQRTPQEAITDGLEIVVSPRSLHSELMCPICLDMLKNTMTTKECLHRFCADCIITALRSGNKECPTCRKKLVSKRSLRPDPNFDALISKIYPSRDEYEAHQERVLARINKHNNQQALSHSIEEGLKIQAMNRLQRGKKQQIENGSGAEDNGDSSHCSNASTHSNQEAGPSNKRTKTSDDSGLEPDNNNAAMAIDPVMDGASEIELVFRPHPTLMEKDDSAQTRYIKTSGNATVDHLSKYLAVRLALEELRSKGESNQMNLDTASEKQYTIYIATASGQFTVLNGSFSLELVSEKYWKVNKPMELYYAPTKEHK.

The residue at position 2 (Ser-2) is an N-acetylserine. Positions 2–179 (SQAVQTNGTQ…AEDNGDSSHC (178 aa)) are interaction with HIP2. Ser-41 is modified (phosphoserine). The RING-type zinc-finger motif lies at 51-91 (CPICLDMLKNTMTTKECLHRFCADCIITALRSGNKECPTCR). Residues 93-98 (KLVSKR) form an interaction with nucleosomes via an acidic patch on histone H2A and histone H2B region. A Glycyl lysine isopeptide (Lys-Gly) (interchain with G-Cter in ubiquitin) cross-link involves residue Lys-112. Residues Ser-143 and Ser-168 each carry the phosphoserine modification. A disordered region spans residues 157-213 (QRGKKQQIENGSGAEDNGDSSHCSNASTHSNQEAGPSNKRTKTSDDSGLEPDNNNAA). Residues 176-191 (SSHCSNASTHSNQEAG) are compositionally biased toward polar residues. Glycyl lysine isopeptide (Lys-Gly) (interchain with G-Cter in SUMO2) cross-links involve residues Lys-249 and Lys-323.

In terms of assembly, component of chromatin-associated Polycomb (PcG) complexes. Component of a number of PRC1-like complexes; these complexes contain either the polycomb group ring finger protein PCGF1, or PCGF2, or PCGF3, or BMI1, or PCGF5, or PCGF6. Distinct PRC1-like complexes are composed of a RING1 subunit (RING1B or RING1A), one of the six PCGF proteins (PCGF1, PCGF2, PCGF3, BMI1, PCGF5 or PCGF6), one PHC protein (PHC1, PHC2 or PHC3) and one of the CBX proteins (CBX2, CBX4, CBX6, CBX7 or CBX8). Part of a complex that contains RNF2, UB2D3 and BMI1; within that complex RNF2 and BMI1 form a tight heterodimer, where UB2D3 interacts only with RNF2. The complex composed of RNF2, UB2D3 and BMI1 binds nucleosomes, and has activity only with nucleosomal histone H2A. Part of a complex that contains PCGF5, RNF2 and UBE2D3. Part of a complex that contains AUTS2, PCGF5, RNF2, CSNK2B and RYBP. Interacts with CBX6 and CBX8. Interacts with PHC1, PCGF2, RYBP, CBX7, CBX4, CBX2, RNF1/RING1, BMI1 and PHC2. Interaction with RYBP and CBX7 is mutually exclusive; both compete for the same binding site on RNF2. Component of repressive BCOR complex containing a Polycomb group subcomplex at least composed of RYBP, PCGF1, BCOR and RING1. Interacts with CBX2 and PHC1. Interacts with CHTOP. Interacts with AURKB. Part of the E2F6.com-1 complex in G0 phase composed of E2F6, MGA, MAX, TFDP1, CBX3, BAT8, EUHMTASE1, RNF1/RING1, RNF2/RING2, MBLR, L3MBTL2 and YAF2. Component of some MLL1/MLL complex, at least composed of the core components KMT2A/MLL1, ASH2L, HCFC1/HCF1, WDR5 and RBBP5, as well as the facultative components BACC1, CHD8, E2F6, HSP70, INO80C, KANSL1, LAS1L, MAX, MCRS1, MGA, MYST1/MOF, PELP1, PHF20, PRP31, RING2, RUVB1/TIP49A, RUVB2/TIP49B, SENP3, TAF1, TAF4, TAF6, TAF7, TAF9 and TEX10. Interacts with RYBP, HIP2 and TFCP2. Interacts with NUPR1. Interacts with SAMD7 in a PHC2-dependent manner. Post-translationally, monoubiquitinated, by auto-ubiquitination. Polyubiquitinated in the presence of UBE2D3 (in vitro).

Its subcellular location is the nucleus. The protein localises to the cytoplasm. The protein resides in the chromosome. It carries out the reaction S-ubiquitinyl-[E2 ubiquitin-conjugating enzyme]-L-cysteine + [acceptor protein]-L-lysine = [E2 ubiquitin-conjugating enzyme]-L-cysteine + N(6)-ubiquitinyl-[acceptor protein]-L-lysine.. It functions in the pathway protein modification; protein ubiquitination. E3 ubiquitin-protein ligase that mediates monoubiquitination of 'Lys-119' of histone H2A (H2AK119Ub), thereby playing a central role in histone code and gene regulation. H2AK119Ub gives a specific tag for epigenetic transcriptional repression and participates in X chromosome inactivation of female mammals. May be involved in the initiation of both imprinted and random X inactivation. Essential component of a Polycomb group (PcG) multiprotein PRC1-like complex, a complex class required to maintain the transcriptionally repressive state of many genes, including Hox genes, throughout development. PcG PRC1 complex acts via chromatin remodeling and modification of histones, rendering chromatin heritably changed in its expressibility. E3 ubiquitin-protein ligase activity is enhanced by BMI1/PCGF4. Acts as the main E3 ubiquitin ligase on histone H2A of the PRC1 complex, while RING1 may rather act as a modulator of RNF2/RING2 activity. Plays a role in the transcriptional repression of genes that are required for pluripotency in embryonic stem cells, thereby contributing to differentiation of the ectodermal and endodermal germ layers. Association with the chromosomal DNA is cell-cycle dependent. In resting B- and T-lymphocytes, interaction with AURKB leads to block its activity, thereby maintaining transcription in resting lymphocytes. Also acts as a negative regulator of autophagy by mediating ubiquitination of AMBRA1, leading to its subsequent degradation. The polypeptide is E3 ubiquitin-protein ligase RING2 (RNF2) (Pongo abelii (Sumatran orangutan)).